We begin with the raw amino-acid sequence, 327 residues long: Probable NAD(P)H-dependent D-xylose reductase xyl1 (327 aa).

Tyr-57 serves as the catalytic Proton donor. His-119 contributes to the substrate binding site. NAD(+)-binding positions include 173–174 (SN), 222–231 (SSLGPQSFIE), and 278–288 (KSNNPDRLAQN).

Belongs to the aldo/keto reductase family.

The catalysed reaction is xylitol + NAD(+) = D-xylose + NADH + H(+). It carries out the reaction xylitol + NADP(+) = D-xylose + NADPH + H(+). It functions in the pathway carbohydrate metabolism; D-xylose degradation. Its function is as follows. Catalyzes the initial reaction in the xylose utilization pathway by reducing D-xylose into xylitol. Xylose is a major component of hemicelluloses such as xylan. Most fungi utilize D-xylose via three enzymatic reactions, xylose reductase (XR), xylitol dehydrogenase (XDH), and xylulokinase, to form xylulose 5-phosphate, which enters pentose phosphate pathway. The sequence is that of Probable NAD(P)H-dependent D-xylose reductase xyl1 (xyl1) from Arthroderma otae (strain ATCC MYA-4605 / CBS 113480) (Microsporum canis).